Reading from the N-terminus, the 180-residue chain is Cell division protein ZapC (180 aa).

This sequence belongs to the ZapC family. Interacts directly with FtsZ.

The protein localises to the cytoplasm. Functionally, contributes to the efficiency of the cell division process by stabilizing the polymeric form of the cell division protein FtsZ. Acts by promoting interactions between FtsZ protofilaments and suppressing the GTPase activity of FtsZ. In Vibrio vulnificus (strain CMCP6), this protein is Cell division protein ZapC.